The primary structure comprises 1040 residues: Desmoglein-4 (1040 aa).

Residues 1–23 form the signal peptide; that stretch reads MDWLLFRNICLLILFMVVLGVNS. Residues 24-49 constitute a propeptide that is removed on maturation; the sequence is EFIVEVKELDIENGTTTWQTVRRQKR. Cadherin domains are found at residues 50 to 157, 158 to 269, 270 to 385, and 389 to 497; these read EWIK…PPVF, TQNV…FPIL, EKTS…GPTF, and SMTF…CPVI. Over 50–633 the chain is Extracellular; it reads EWIKFAAACR…RQSNVGLGPA (584 aa). A glycan (N-linked (GlcNAc...) asparagine) is linked at Asn-110. A glycan (N-linked (GlcNAc...) asparagine) is linked at Asn-545. The helical transmembrane segment at 634 to 654 threads the bilayer; it reads GIGMIILGLLLLFLSPLLLLM. The Cytoplasmic segment spans residues 655-1040; it reads CCCKRRQPEG…RYSNIHYSRQ (386 aa). 2 Desmoglein repeat repeats span residues 883–909 and 910–940; these read TLSE…IVTE and TYTA…ETVM. The disordered stretch occupies residues 1015-1040; sequence QTTRSTSPMTSQHRVTRYSNIHYSRQ.

In terms of assembly, interacts with JUP.

It localises to the cell membrane. The protein localises to the cell junction. Its subcellular location is the desmosome. Its function is as follows. A component of desmosome cell-cell junctions which are required for positive regulation of cellular adhesion. Coordinates the transition from proliferation to differentiation in hair follicle keratinocytes. Plays a role in moderating lymphocyte migration to inflamed skin and maintaining homeostasis of the epidermal inflammatory response. This chain is Desmoglein-4 (Dsg4), found in Rattus norvegicus (Rat).